Reading from the N-terminus, the 347-residue chain is Dihydroorotate dehydrogenase (quinone) (347 aa).

FMN contacts are provided by residues 61 to 65 (AGLDK) and Thr-85. Substrate is bound at residue Lys-65. A substrate-binding site is contributed by 110-114 (NRMGF). The FMN site is built by Asn-138 and Asn-171. Asn-171 provides a ligand contact to substrate. Ser-174 (nucleophile) is an active-site residue. Asn-176 provides a ligand contact to substrate. 2 residues coordinate FMN: Lys-216 and Thr-244. 245 to 246 (NT) is a binding site for substrate. FMN is bound by residues Gly-267, Gly-296, and 317-318 (YT).

It belongs to the dihydroorotate dehydrogenase family. Type 2 subfamily. Monomer. The cofactor is FMN.

The protein localises to the cell membrane. The catalysed reaction is (S)-dihydroorotate + a quinone = orotate + a quinol. The protein operates within pyrimidine metabolism; UMP biosynthesis via de novo pathway; orotate from (S)-dihydroorotate (quinone route): step 1/1. Functionally, catalyzes the conversion of dihydroorotate to orotate with quinone as electron acceptor. This is Dihydroorotate dehydrogenase (quinone) from Azotobacter vinelandii (strain DJ / ATCC BAA-1303).